Here is a 767-residue protein sequence, read N- to C-terminus: MSGDHLHNDSQIEADFRLNDSHKHKDKHKDREHRHKEHKKDKEKDREKSKHSNSEHKDSEKKHKEKEKTKHKDGSSEKHKDKHKDRDKEKRKEEKIRASGDAKIKKEKENGFSSPPRIKDEPDDDGYFAPPKEDIKPLKRPRDEDDADYKPKKIKTEDIKKEKKRKLEEEEDGKLKKTKNKDKDKKGAESDNKKKKPKKEEEQKWKWWEEERYPEGIKWKFLEHKGPVFAPPYEPLPEGVKFYYDGKVMKLSPKAEEVATFFAKMLDHEYTTKEIFRKNFFKDWRKEMTNDEKNVITNLSKCDFTQMSQYFKDQSEARKQMSKEEKLKIKEENEKLLKEYGFCVMDNHRERIANFKIEPPGLFRGRGNHPKMGMLKRRIMPEDIIINCSKDAKVPSPPPGHKWKEVRHDNKVTWLVSWTENIQGSIKYIMLNPSSRIKGEKDWQKYETARRLKKCVDKIRNQYREDWKSKEMKVRQRAVALYFIDKLALRAGNEKEEGETADTVSCCSLRVEHINLHPELDGQEYVVEFDFPGKDSIRYYNKVPVEKRVFKNLQLFMENKQPEDDLFDRLNTGILNKHLQDLMEGLTAKVFRTYNASITLQQQLKELTAPDENVPAKILSYNRANRAVAILCNHQRAPPKTFEKSMMNLQSKIDAKKDQLADARRDLKSAKADAKVMKDAKTKKVVESKKKAVQRLEEQLMKLEVQATDREENKQIALGTSKLNYLDPRITVAWCKKWGVPIEKIYNKTQREKFAWAIDMTDEDYEF.

Residues 1–23 (MSGDHLHNDSQIEADFRLNDSHK) are compositionally biased toward basic and acidic residues. The disordered stretch occupies residues 1–201 (MSGDHLHNDS…NKKKKPKKEE (201 aa)). Position 2 is an N-acetylserine (S2). Residues S2 and S10 each carry the phosphoserine modification. A compositionally biased stretch (basic residues) spans 24–39 (HKDKHKDREHRHKEHK). The segment covering 40-110 (KDKEKDREKS…DAKIKKEKEN (71 aa)) has biased composition (basic and acidic residues). S59 is modified (phosphoserine). Residue K103 forms a Glycyl lysine isopeptide (Lys-Gly) (interchain with G-Cter in SUMO2) linkage. K105 participates in a covalent cross-link: Glycyl lysine isopeptide (Lys-Gly) (interchain with G-Cter in SUMO); alternate. K105 participates in a covalent cross-link: Glycyl lysine isopeptide (Lys-Gly) (interchain with G-Cter in SUMO2); alternate. At S114 the chain carries Phosphoserine. A Glycyl lysine isopeptide (Lys-Gly) (interchain with G-Cter in SUMO); alternate cross-link involves residue K119. K119 is covalently cross-linked (Glycyl lysine isopeptide (Lys-Gly) (interchain with G-Cter in SUMO2); alternate). A Glycyl lysine isopeptide (Lys-Gly) (interchain with G-Cter in SUMO1); alternate cross-link involves residue K119. The span at 131 to 168 (PKEDIKPLKRPRDEDDADYKPKKIKTEDIKKEKKRKLE) shows a compositional bias: basic and acidic residues. Residues K136 and K150 each participate in a glycyl lysine isopeptide (Lys-Gly) (interchain with G-Cter in SUMO2) cross-link. A Glycyl lysine isopeptide (Lys-Gly) (interchain with G-Cter in SUMO); alternate cross-link involves residue K155. A Glycyl lysine isopeptide (Lys-Gly) (interchain with G-Cter in SUMO2); alternate cross-link involves residue K155. Glycyl lysine isopeptide (Lys-Gly) (interchain with G-Cter in SUMO2) cross-links involve residues K160 and K166. K174 participates in a covalent cross-link: Glycyl lysine isopeptide (Lys-Gly) (interchain with G-Cter in SUMO2); alternate. K174 bears the N6-acetyllysine; alternate mark. Basic and acidic residues predominate over residues 181–201 (KDKDKKGAESDNKKKKPKKEE). A Glycyl lysine isopeptide (Lys-Gly) (interchain with G-Cter in SUMO2) cross-link involves residue K206. An N6-acetyllysine modification is found at K282. A Glycyl lysine isopeptide (Lys-Gly) (interchain with G-Cter in SUMO2) cross-link involves residue K338. Interaction with DNA regions lie at residues 427–428 (KY) and 490–495 (RAGNEK). One can recognise a Topo IB-type catalytic domain in the interval 434–767 (SSRIKGEKDW…IDMTDEDYEF (334 aa)). At S508 the chain carries Phosphoserine; by CK2. Residue K551 forms a Glycyl lysine isopeptide (Lys-Gly) (interchain with G-Cter in SUMO2) linkage. The segment at 587–589 (TAK) is interaction with DNA. Glycyl lysine isopeptide (Lys-Gly) (interchain with G-Cter in SUMO2) cross-links involve residues K644, K702, and K714. Catalysis depends on Y725, which acts as the O-(3'-phospho-DNA)-tyrosine intermediate.

This sequence belongs to the type IB topoisomerase family. Monomer. Interacts with ERCC6. Interacts with TPRN; TPRN interacts with a number of DNA damage response proteins, is recruited to sites of DNA damage and may play a role in DNA damage repair. Post-translationally, sumoylated. Lys-119 is the main site of sumoylation. Sumoylation plays a role in partitioning TOP1 between nucleoli and nucleoplasm. Levels are dramatically increased on camptothecin (CPT) treatment. Phosphorylation at Ser-508 by CK2 increases binding to supercoiled DNA and sensitivity to camptothecin.

It is found in the nucleus. The protein localises to the nucleolus. It localises to the nucleoplasm. It catalyses the reaction ATP-independent breakage of single-stranded DNA, followed by passage and rejoining.. With respect to regulation, specifically inhibited by camptothecin (CPT), a plant alkaloid with antitumor activity. Its function is as follows. Releases the supercoiling and torsional tension of DNA introduced during the DNA replication and transcription by transiently cleaving and rejoining one strand of the DNA duplex. Introduces a single-strand break via transesterification at a target site in duplex DNA. The scissile phosphodiester is attacked by the catalytic tyrosine of the enzyme, resulting in the formation of a DNA-(3'-phosphotyrosyl)-enzyme intermediate and the expulsion of a 5'-OH DNA strand. The free DNA strand then rotates around the intact phosphodiester bond on the opposing strand, thus removing DNA supercoils. Finally, in the religation step, the DNA 5'-OH attacks the covalent intermediate to expel the active-site tyrosine and restore the DNA phosphodiester backbone. Regulates the alternative splicing of tissue factor (F3) pre-mRNA in endothelial cells. Involved in the circadian transcription of the core circadian clock component BMAL1 by altering the chromatin structure around the ROR response elements (ROREs) on the BMAL1 promoter. This Cricetulus griseus (Chinese hamster) protein is DNA topoisomerase 1 (TOP1).